The following is a 221-amino-acid chain: uncharacterized protein (221 aa).

This is an uncharacterized protein from Escherichia coli (strain K12).